The sequence spans 323 residues: Elongation factor P--(R)-beta-lysine ligase (323 aa).

76–78 (SPE) contacts substrate. Residues 100 to 102 (RNE) and asparagine 109 each bind ATP. Tyrosine 118 is a binding site for substrate. Residue 242 to 243 (EL) participates in ATP binding. Glutamate 249 contacts substrate. Glycine 298 contributes to the ATP binding site.

It belongs to the class-II aminoacyl-tRNA synthetase family. EpmA subfamily. Homodimer.

It carries out the reaction D-beta-lysine + L-lysyl-[protein] + ATP = N(6)-((3R)-3,6-diaminohexanoyl)-L-lysyl-[protein] + AMP + diphosphate + H(+). Functionally, with EpmB is involved in the beta-lysylation step of the post-translational modification of translation elongation factor P (EF-P). Catalyzes the ATP-dependent activation of (R)-beta-lysine produced by EpmB, forming a lysyl-adenylate, from which the beta-lysyl moiety is then transferred to the epsilon-amino group of a conserved specific lysine residue in EF-P. The polypeptide is Elongation factor P--(R)-beta-lysine ligase (Actinobacillus succinogenes (strain ATCC 55618 / DSM 22257 / CCUG 43843 / 130Z)).